An 815-amino-acid polypeptide reads, in one-letter code: Leucine--tRNA ligase (815 aa).

Positions 42 to 52 (PYPSGRLHMGH) match the 'HIGH' region motif. Residues 574-578 (KMSKS) carry the 'KMSKS' region motif. Position 577 (lysine 577) interacts with ATP.

Belongs to the class-I aminoacyl-tRNA synthetase family.

The protein resides in the cytoplasm. It carries out the reaction tRNA(Leu) + L-leucine + ATP = L-leucyl-tRNA(Leu) + AMP + diphosphate. The sequence is that of Leucine--tRNA ligase from Marinomonas sp. (strain MWYL1).